Here is a 494-residue protein sequence, read N- to C-terminus: Ketol-acid reductoisomerase (NADP(+)) (494 aa).

In terms of domain architecture, KARI N-terminal Rossmann spans leucine 14–serine 208. NADP(+) contacts are provided by residues cysteine 45–glutamine 48, arginine 68, arginine 76, serine 78, and aspartate 108–glutamine 110. Histidine 132 is a catalytic residue. Position 158 (glycine 158) interacts with NADP(+). KARI C-terminal knotted domains follow at residues serine 209–valine 344 and threonine 345–methionine 487. Mg(2+) is bound by residues aspartate 217, glutamate 221, glutamate 389, and glutamate 393. Serine 414 serves as a coordination point for substrate.

It belongs to the ketol-acid reductoisomerase family. Mg(2+) is required as a cofactor.

The enzyme catalyses (2R)-2,3-dihydroxy-3-methylbutanoate + NADP(+) = (2S)-2-acetolactate + NADPH + H(+). It catalyses the reaction (2R,3R)-2,3-dihydroxy-3-methylpentanoate + NADP(+) = (S)-2-ethyl-2-hydroxy-3-oxobutanoate + NADPH + H(+). The protein operates within amino-acid biosynthesis; L-isoleucine biosynthesis; L-isoleucine from 2-oxobutanoate: step 2/4. Its pathway is amino-acid biosynthesis; L-valine biosynthesis; L-valine from pyruvate: step 2/4. Its function is as follows. Involved in the biosynthesis of branched-chain amino acids (BCAA). Catalyzes an alkyl-migration followed by a ketol-acid reduction of (S)-2-acetolactate (S2AL) to yield (R)-2,3-dihydroxy-isovalerate. In the isomerase reaction, S2AL is rearranged via a Mg-dependent methyl migration to produce 3-hydroxy-3-methyl-2-ketobutyrate (HMKB). In the reductase reaction, this 2-ketoacid undergoes a metal-dependent reduction by NADPH to yield (R)-2,3-dihydroxy-isovalerate. This is Ketol-acid reductoisomerase (NADP(+)) from Photobacterium profundum (strain SS9).